A 64-amino-acid chain; its full sequence is Beta-defensin 1 (64 aa).

An N-terminal signal peptide occupies residues 1-22 (MRLHHLLLVLFFVVLSAGSGFT). 3 cysteine pairs are disulfide-bonded: Cys31-Cys60, Cys38-Cys53, and Cys43-Cys61.

It belongs to the beta-defensin family. In terms of assembly, monomer. Homodimer.

It is found in the secreted. The protein localises to the membrane. Has bactericidal activity. May act as a ligand for C-C chemokine receptor CCR6. Positively regulates the sperm motility and bactericidal activity in a CCR6-dependent manner. Binds to CCR6 and triggers Ca2+ mobilization in the sperm which is important for its motility. The chain is Beta-defensin 1 (DEFB1) from Ovis aries (Sheep).